Reading from the N-terminus, the 900-residue chain is Probable beta-mannosidase (900 aa).

A signal peptide spans 1–21; that stretch reads MRTSLVVCLFWLLFQLHTTHG. N38, N42, and N131 each carry an N-linked (GlcNAc...) asparagine glycan. The active-site Proton donor is E463. N-linked (GlcNAc...) asparagine glycans are attached at residues N477, N576, N661, and N738.

It belongs to the glycosyl hydrolase 2 family.

It localises to the lysosome. The enzyme catalyses Hydrolysis of terminal, non-reducing beta-D-mannose residues in beta-D-mannosides.. This is Probable beta-mannosidase from Caenorhabditis elegans.